A 605-amino-acid chain; its full sequence is DNA mismatch repair protein MutL (605 aa).

Belongs to the DNA mismatch repair MutL/HexB family.

Its function is as follows. This protein is involved in the repair of mismatches in DNA. It is required for dam-dependent methyl-directed DNA mismatch repair. May act as a 'molecular matchmaker', a protein that promotes the formation of a stable complex between two or more DNA-binding proteins in an ATP-dependent manner without itself being part of a final effector complex. In Pelotomaculum thermopropionicum (strain DSM 13744 / JCM 10971 / SI), this protein is DNA mismatch repair protein MutL.